Here is a 911-residue protein sequence, read N- to C-terminus: DNA mismatch repair protein MutS (911 aa).

660-667 (GPNMAGKS) is a binding site for ATP.

The protein belongs to the DNA mismatch repair MutS family.

In terms of biological role, this protein is involved in the repair of mismatches in DNA. It is possible that it carries out the mismatch recognition step. This protein has a weak ATPase activity. The chain is DNA mismatch repair protein MutS from Rhodopseudomonas palustris (strain HaA2).